A 58-amino-acid polypeptide reads, in one-letter code: T-cell receptor gamma alternate reading frame protein (58 aa).

In terms of tissue distribution, detected at low levels in the ductal cells of the salivary gland but not in the acinar cells (at protein level). Expressed in endometrium (at protein level). Expressed in epithelial cells within the acinar ducts of the prostate.

This is T-cell receptor gamma alternate reading frame protein from Homo sapiens (Human).